We begin with the raw amino-acid sequence, 157 residues long: Urease accessory protein UreE (157 aa).

Belongs to the UreE family.

The protein resides in the cytoplasm. Functionally, involved in urease metallocenter assembly. Binds nickel. Probably functions as a nickel donor during metallocenter assembly. This Paenarthrobacter aurescens (strain TC1) protein is Urease accessory protein UreE.